Consider the following 578-residue polypeptide: Phenylalanine--tRNA ligase beta subunit (578 aa).

The 79-residue stretch at 292-370 (FDTDEKSVSH…RAYGFDNLEP (79 aa)) folds into the B5 domain. Mg(2+) is bound by residues Asp348, Asp354, Asp357, and Asp358.

It belongs to the phenylalanyl-tRNA synthetase beta subunit family. Type 2 subfamily. As to quaternary structure, tetramer of two alpha and two beta subunits. Requires Mg(2+) as cofactor.

The protein localises to the cytoplasm. The enzyme catalyses tRNA(Phe) + L-phenylalanine + ATP = L-phenylalanyl-tRNA(Phe) + AMP + diphosphate + H(+). The sequence is that of Phenylalanine--tRNA ligase beta subunit from Halorubrum lacusprofundi (strain ATCC 49239 / DSM 5036 / JCM 8891 / ACAM 34).